Here is a 255-residue protein sequence, read N- to C-terminus: Small ribosomal subunit protein uS10m (255 aa).

The transit peptide at 1-32 (MALPAARSALSARAFIRPAAALNAAASSSRYL) directs the protein to the mitochondrion. Disordered regions lie at residues 30-52 (RYLSTTTPRHDAPVATTPGNSET) and 220-255 (SEGEGEDQAEGVQKIVDAAREEKPAEKLKEEEAKSS). Residues 236 to 255 (DAAREEKPAEKLKEEEAKSS) show a composition bias toward basic and acidic residues.

It belongs to the universal ribosomal protein uS10 family. As to quaternary structure, part of the mitochondrial small ribosomal subunit.

Its subcellular location is the mitochondrion. In terms of biological role, involved in mitochondrial genome encoded proteins translation. Involved in the binding of tRNA to the ribosomes. This is Small ribosomal subunit protein uS10m (RSM10) from Cryptococcus neoformans var. neoformans serotype D (strain B-3501A) (Filobasidiella neoformans).